The following is a 717-amino-acid chain: Radial spoke head protein 6 homolog A (717 aa).

Disordered stretches follow at residues 1–65 (MGDL…SLSQ), 503–523 (SEEEGDEEEEGGAGRDSYEEN), 563–588 (TEEEEDLGEEEEKADEGPEEVEQEVG), and 672–717 (GPEI…ETDD). Composition is skewed to acidic residues over residues 503 to 513 (SEEEGDEEEEG), 564 to 585 (EEEEDLGEEEEKADEGPEEVEQ), and 700 to 717 (TEEEEEGEEEEEGEETDD).

It belongs to the flagellar radial spoke RSP4/6 family. As to quaternary structure, component of the axonemal radial spoke 1 (RS1) and 2 (RS2) complexes, at least composed of spoke head proteins RSPH1, RSPH3, RSPH9 and the cilia-specific component RSPH4A or sperm-specific component RSPH6A, spoke stalk proteins RSPH14, DNAJB13, DYDC1, ROPN1L and NME5, and the RS1 complex-specific anchor protein IQUB. Interacts with RSPH1. Interacts with RSPH3B. Interacts with RSPH4A. Interacts with RSPH9. Interacts with RSPH10B. Phosphorylated by PKA. Phosphorylation increases in capacitated sperm.

It localises to the cytoplasm. The protein resides in the cytoskeleton. Its subcellular location is the flagellum axoneme. Functionally, functions as part of radial spoke complexes in the axoneme of sperm flagella that play an important part in motility. The triple radial spokes (RS1, RS2 and RS3) are required to modulate beating of the sperm flagellum. The protein is Radial spoke head protein 6 homolog A of Homo sapiens (Human).